The primary structure comprises 639 residues: MGFEASYDVIVVGGGHAGTEAALASARAGARTLLLTHNIETIGQMSCNPAIGGIGKGHLVKEIDALGGLMARAADRGGIHFRTLNSRKGPAVRATRAQADRVRYKAAVRSVVENTPHLFLFQQAVDDLIVEGERVAGVITQTGLRFRSPAVVLTVGTFLGGRIHVGEVQHAGGRAGDPPSIALAARLRELAPRVGRLKTGTPPRIDGRSIDYAQLTEQPGDAPRPVFSFIGARDEHPPQVSCWIARTTEHTHAIIRGALHRSPMYSGAIEGVGPRYCPSIEDKVVRFADKDSHQVFIEPEGLDTHEVYPNGISTSLPFDVQFELVRSIPGFEQAHITRPGYAIEYDYFDPRDLKPSLETRCLAGLFFAGQINGTTGYEEAAAQGLVAGLNAARSVRDLAPWCPRRDEAYIGVLIDDLITRGTAEPYRMFTSRAEYRLMLREDNADLRLTPLGRDMGLVDDARWAAFCTKREAVERETQRLAATRLDPERVDREAAERVIGGAFSREQNLLDLLRRPEVDYAALMGLEGAGPGVEDPRVAEQVEIGAKYAGYIQRQQDEVARQQRHENLALPEGLDYAAITGLSMEVRQKLAAHRPHTLGQAARIPGVTPAAVSLLLVHVKRQGGNGPQSPRPDDGRARA.

FAD-binding positions include Gly-13 to Gly-18, Val-125, and Ser-180. Gly-273–Phe-287 serves as a coordination point for NAD(+). Position 370 (Gln-370) interacts with FAD. Residues Lys-620–Ala-639 are disordered.

Belongs to the MnmG family. As to quaternary structure, homodimer. Heterotetramer of two MnmE and two MnmG subunits. The cofactor is FAD.

It is found in the cytoplasm. NAD-binding protein involved in the addition of a carboxymethylaminomethyl (cmnm) group at the wobble position (U34) of certain tRNAs, forming tRNA-cmnm(5)s(2)U34. The polypeptide is tRNA uridine 5-carboxymethylaminomethyl modification enzyme MnmG (Thioalkalivibrio sulfidiphilus (strain HL-EbGR7)).